A 777-amino-acid polypeptide reads, in one-letter code: Glucocorticoid receptor (777 aa).

The segment covering 1-14 (MDSKESLTPGREEN) has biased composition (basic and acidic residues). The tract at residues 1–23 (MDSKESLTPGREENPSSVLAQER) is disordered. The segment at 1-420 (MDSKESLTPG…TATTGPPPKL (420 aa)) is modulating. The residue at position 8 (threonine 8) is a Phosphothreonine. Arginine 23 bears the Omega-N-methylarginine mark. A phosphoserine mark is found at serine 45, serine 113, serine 134, and serine 141. A compositionally biased stretch (polar residues) spans 130 to 140 (NRSTSVPENPK). The segment at 130–183 (NRSTSVPENPKSSASTAVSAAPTEKEFPKTHSDISSEQQHLKGQTGTNGGNVKL) is disordered. Positions 141-150 (SSASTAVSAA) are enriched in low complexity. The segment covering 152–163 (TEKEFPKTHSDI) has biased composition (basic and acidic residues). The segment covering 164–174 (SSEQQHLKGQT) has biased composition (polar residues). Residues serine 203, serine 211, and serine 226 each carry the phosphoserine modification. Lysine 258 is covalently cross-linked (Glycyl lysine isopeptide (Lys-Gly) (interchain with G-Cter in SUMO2)). A Phosphoserine modification is found at serine 267. Glycyl lysine isopeptide (Lys-Gly) (interchain with G-Cter in SUMO); alternate cross-links involve residues lysine 277 and lysine 293. Glycyl lysine isopeptide (Lys-Gly) (interchain with G-Cter in SUMO2); alternate cross-links involve residues lysine 277 and lysine 293. Residues 394–414 (SSPSMRPDVSSPPSSSSTATT) show a composition bias toward low complexity. Positions 394–415 (SSPSMRPDVSSPPSSSSTATTG) are disordered. Serine 404 bears the Phosphoserine mark. Lysine 419 is covalently cross-linked (Glycyl lysine isopeptide (Lys-Gly) (interchain with G-Cter in ubiquitin)). 2 NR C4-type zinc fingers span residues 421–441 (CLVC…CGSC) and 457–476 (CAGR…CPAC). A DNA-binding region (nuclear receptor) is located at residues 421-486 (CLVCSDEASG…RYRKCLQAGM (66 aa)). Residues lysine 480, lysine 492, lysine 494, and lysine 495 each carry the N6-acetyllysine modification. Residues 485–777 (GMNLEARKTK…NIKKLLFHQK (293 aa)) are interaction with CLOCK. The hinge stretch occupies residues 487-523 (NLEARKTKKKIKGIQQATTGVSQETPENPANKTIVPA). In terms of domain architecture, NR LBD spans 524-758 (TLPQLTPTLV…FPEMLAEIIT (235 aa)). An interaction with CRY1 region spans residues 532–697 (LVSLLEVIEP…EIRMTYIKEL (166 aa)). Lysine 703 is covalently cross-linked (Glycyl lysine isopeptide (Lys-Gly) (interchain with G-Cter in SUMO)).

The protein belongs to the nuclear hormone receptor family. NR3 subfamily. As to quaternary structure, heteromultimeric cytoplasmic complex with HSP90AA1, HSPA1A/HSPA1B, and FKBP5 or another immunophilin such as PPID, STIP1, or the immunophilin homolog PPP5C. Upon ligand binding FKBP5 dissociates from the complex and FKBP4 takes its place, thereby linking the complex to dynein and mediating transport to the nucleus, where the complex dissociates. Probably forms a complex composed of chaperones HSP90 and HSP70, co-chaperones CDC37, PPP5C, TSC1 and client protein TSC2, CDK4, AKT, RAF1 and NR3C1; this complex does not contain co-chaperones STIP1/HOP and PTGES3/p23. Directly interacts with UNC45A. Binds to DNA as a homodimer, and as heterodimer with NR3C2 or the retinoid X receptor. Binds STAT5A and STAT5B homodimers and heterodimers. Interacts with NRIP1, POU2F1, POU2F2 and TRIM28. Interacts with several coactivator complexes, including the SMARCA4 complex, CREBBP/EP300, TADA2L (Ada complex) and p160 coactivators such as NCOA2 and NCOA6. Interaction with BAG1 inhibits transactivation. Interacts with HEXIM1 and TGFB1I1. Interacts with NCOA1. Interacts with NCOA3, SMARCA4, SMARCC1, SMARCD1, and SMARCE1. Interacts with CLOCK, CRY1 and CRY2 in a ligand-dependent fashion. Interacts with CIART. Interacts with RWDD3. Interacts with UBE2I/UBC9 and this interaction is enhanced in the presence of RWDD3. Interacts with GRIP1. Interacts with NR4A3 (via nuclear receptor DNA-binding domain), represses transcription activity of NR4A3 on the POMC promoter Nur response element (NurRE). Directly interacts with PNRC2 to attract and form a complex with UPF1 and DCP1A; the interaction leads to rapid mRNA degradation. Interacts with GSK3B. Interacts with FNIP1 and FNIP2. Interacts (via C-terminus) with HNRNPU (via C-terminus). Interacts with MCM3AP. Interacts (via domain NR LBD) with HSP90AA1 and HSP90AB1. In the absence of hormonal ligand, interacts with TACC1. Interacts (via NR LBD domain) with ZNF764 (via KRAB domain); the interaction regulates transcription factor activity of NR3C1 by directing its actions toward certain biologic pathways. Acetylation by CLOCK reduces its binding to glucocorticoid response elements and its transcriptional activity. Post-translationally, increased proteasome-mediated degradation in response to glucocorticoids. In terms of processing, phosphorylated in the absence of hormone; becomes hyperphosphorylated in the presence of glucocorticoid. The Ser-203, Ser-226 and Ser-404-phosphorylated forms are mainly cytoplasmic, and the Ser-211-phosphorylated form is nuclear. Phosphorylation at Ser-211 increases transcriptional activity. Phosphorylation at Ser-203, Ser-226 and Ser-404 decreases signaling capacity. Phosphorylation at Ser-404 may protect from glucocorticoid-induced apoptosis. Phosphorylation at Ser-203 and Ser-211 is not required in regulation of chromosome segregation. May be dephosphorylated by PPP5C, attenuates NR3C1 action. Ubiquitinated by UBR5, leading to its degradation: UBR5 specifically recognizes and binds ligand-bound NR3C1 when it is not associated with coactivators (NCOAs). In presence of NCOAs, the UBR5-degron is not accessible, preventing its ubiquitination and degradation. Post-translationally, sumoylation at Lys-277 and Lys-293 negatively regulates its transcriptional activity. Sumoylation at Lys-703 positively regulates its transcriptional activity in the presence of RWDD3. Sumoylation at Lys-277 and Lys-293 is dispensable whereas sumoylation at Lys-703 is critical for the stimulatory effect of RWDD3 on its transcriptional activity. Heat shock increases sumoylation in a RWDD3-dependent manner.

The protein resides in the cytoplasm. It localises to the nucleus. Its subcellular location is the mitochondrion. It is found in the cytoskeleton. The protein localises to the spindle. The protein resides in the microtubule organizing center. It localises to the centrosome. Its subcellular location is the chromosome. It is found in the nucleoplasm. In terms of biological role, receptor for glucocorticoids (GC). Has a dual mode of action: as a transcription factor that binds to glucocorticoid response elements (GRE), both for nuclear and mitochondrial DNA, and as a modulator of other transcription factors. Affects inflammatory responses, cellular proliferation and differentiation in target tissues. Involved in chromatin remodeling. Plays a role in rapid mRNA degradation by binding to the 5' UTR of target mRNAs and interacting with PNRC2 in a ligand-dependent manner which recruits the RNA helicase UPF1 and the mRNA-decapping enzyme DCP1A, leading to RNA decay. Could act as a coactivator for STAT5-dependent transcription upon growth hormone (GH) stimulation and could reveal an essential role of hepatic GR in the control of body growth. Mediates glucocorticoid-induced apoptosis. Promotes accurate chromosome segregation during mitosis. May act as a tumor suppressor. May play a negative role in adipogenesis through the regulation of lipolytic and antilipogenic gene expression. The protein is Glucocorticoid receptor (NR3C1) of Pongo abelii (Sumatran orangutan).